The chain runs to 151 residues: Deoxyuridine 5'-triphosphate nucleotidohydrolase (151 aa).

Residues 70–72 (RSG), Asn-83, 87–89 (LID), and Met-97 contribute to the substrate site.

The protein belongs to the dUTPase family. Requires Mg(2+) as cofactor.

The enzyme catalyses dUTP + H2O = dUMP + diphosphate + H(+). Its pathway is pyrimidine metabolism; dUMP biosynthesis; dUMP from dCTP (dUTP route): step 2/2. In terms of biological role, this enzyme is involved in nucleotide metabolism: it produces dUMP, the immediate precursor of thymidine nucleotides and it decreases the intracellular concentration of dUTP so that uracil cannot be incorporated into DNA. The sequence is that of Deoxyuridine 5'-triphosphate nucleotidohydrolase from Actinobacillus pleuropneumoniae serotype 7 (strain AP76).